The following is a 448-amino-acid chain: Glutamyl-tRNA(Gln) amidotransferase subunit D (448 aa).

Residues 92-423 (SEVKIISTGG…DKIRSLMLTN (332 aa)) enclose the Asparaginase/glutaminase domain. Residues T102, T178, D179, and K257 contribute to the active site.

Belongs to the asparaginase 1 family. GatD subfamily. In terms of assembly, heterodimer of GatD and GatE.

It carries out the reaction L-glutamyl-tRNA(Gln) + L-glutamine + ATP + H2O = L-glutaminyl-tRNA(Gln) + L-glutamate + ADP + phosphate + H(+). Functionally, allows the formation of correctly charged Gln-tRNA(Gln) through the transamidation of misacylated Glu-tRNA(Gln) in organisms which lack glutaminyl-tRNA synthetase. The reaction takes place in the presence of glutamine and ATP through an activated gamma-phospho-Glu-tRNA(Gln). The GatDE system is specific for glutamate and does not act on aspartate. The sequence is that of Glutamyl-tRNA(Gln) amidotransferase subunit D from Sulfurisphaera tokodaii (strain DSM 16993 / JCM 10545 / NBRC 100140 / 7) (Sulfolobus tokodaii).